A 384-amino-acid chain; its full sequence is Cell adhesion molecule CEACAM18 (384 aa).

An N-terminal signal peptide occupies residues Met1–Gly30. Asn108, Asn112, Asn121, Asn162, and Asn270 each carry an N-linked (GlcNAc...) asparagine glycan. Residues Pro227 to Gln314 enclose the Ig-like C2-type domain. A disulfide bridge links Cys255 with Cys296. The tract at residues Gln358–Arg384 is disordered. Over residues Pro359–Met369 the composition is skewed to polar residues. The segment covering Pro373–Arg384 has biased composition (basic and acidic residues).

This sequence belongs to the immunoglobulin superfamily. CEA family.

The chain is Cell adhesion molecule CEACAM18 from Homo sapiens (Human).